A 112-amino-acid chain; its full sequence is Nitrogen regulatory protein P-II (112 aa).

Tyr51 is modified (O-UMP-tyrosine).

It belongs to the P(II) protein family. In terms of assembly, homotrimer.

Its function is as follows. In nitrogen-limiting conditions, when the ratio of Gln to 2-ketoglutarate decreases, P-II is uridylylated to P-II-UMP. P-II-UMP allows the deadenylation of glutamine synthetase (GS), thus activating the enzyme. Conversely, in nitrogen excess P-II is deuridylated and promotes the adenylation of GS. P-II indirectly controls the transcription of the GS gene (glnA). P-II prevents NR-II-catalyzed conversion of NR-I to NR-I-phosphate, the transcriptional activator of glnA. When P-II is uridylylated to P-II-UMP, these events are reversed. The sequence is that of Nitrogen regulatory protein P-II (glnB) from Aquifex aeolicus (strain VF5).